Here is a 281-residue protein sequence, read N- to C-terminus: Ribonuclease HII (281 aa).

The segment at 1-46 is disordered; sequence MIRDTKQPIKVPAKPASRSGGKAKTVKPKTIKPKTSAKAAAAKPAS. Low complexity predominate over residues 33–46; the sequence is PKTSAKAAAAKPAS. The region spanning 73–261 is the RNase H type-2 domain; it reads WPIAGCDEAG…VAAAWQKIEG (189 aa). A divalent metal cation contacts are provided by Asp79, Glu80, and Asp170.

Belongs to the RNase HII family. Mn(2+) serves as cofactor. It depends on Mg(2+) as a cofactor.

The protein resides in the cytoplasm. It carries out the reaction Endonucleolytic cleavage to 5'-phosphomonoester.. In terms of biological role, endonuclease that specifically degrades the RNA of RNA-DNA hybrids. The chain is Ribonuclease HII from Rhodopseudomonas palustris (strain TIE-1).